Consider the following 557-residue polypeptide: MFDCEPVSLLITIPGQVPEPIAADFPWLSLSILFPIAGSLLVPFIPDEGEGKQVRWYALFIALTTFLITVGAYLKGFEPAEEGLQLSERVPWLPDLGLTWAVGADGLSMPLILLTSFITALAVLAAWPVSFKPKLFFFLILAMDGGQIAVFAVQDMLLFFLAWELELLPVYLLLAIWGGKKRQYAATKFIIYTAGSSLFILLAGLAMGFFGGGAPNFEFTHLANQQFGTGFQLLCYGGLLIAFGVKLPIVPLHTWLPDAHGEATAPVHMLLAGILLKMGGYALLRFNAQLLPAAHAQFAPLLIVLGVVNIIYAALTSFAQRNLKRKIAYSSISHMGFVLIGIGSFSTLGTSGAMLQMISHGLIGASLFFLVGATYDRTHTLQLNEMGGVGQKMRIMFALWTVCSLASLALPGMSGFVSELMVFAGLVTDEVYTLPFRIVIAGLAAIGVILTPIYLLSMLREIFFGQENVDLLAKRELVDAEPREIYIIGSLLVPIIGIGLYPRIMTETYTASIDGLVARDKLSIERVINTSSSEFSNQNISISNGQAPNLNIYSSSK.

A run of 14 helical transmembrane segments spans residues phenylalanine 25–isoleucine 45, tyrosine 57–phenylalanine 77, leucine 111–phenylalanine 131, proline 133–valine 153, leucine 157–tryptophan 177, phenylalanine 189–phenylalanine 209, glycine 230–valine 250, threonine 264–leucine 284, phenylalanine 298–phenylalanine 318, isoleucine 327–threonine 347, alanine 353–alanine 373, phenylalanine 397–valine 417, isoleucine 438–methionine 458, and isoleucine 485–methionine 505.

This sequence belongs to the complex I subunit 4 family.

It localises to the cellular thylakoid membrane. It carries out the reaction a plastoquinone + NADH + (n+1) H(+)(in) = a plastoquinol + NAD(+) + n H(+)(out). The enzyme catalyses a plastoquinone + NADPH + (n+1) H(+)(in) = a plastoquinol + NADP(+) + n H(+)(out). Functionally, NDH-1 shuttles electrons from NAD(P)H, via FMN and iron-sulfur (Fe-S) centers, to quinones in the respiratory chain. The immediate electron acceptor for the enzyme in this species is believed to be plastoquinone. Couples the redox reaction to proton translocation (for every two electrons transferred, four hydrogen ions are translocated across the cytoplasmic membrane), and thus conserves the redox energy in a proton gradient. The sequence is that of NAD(P)H-quinone oxidoreductase chain 4 from Prochlorococcus marinus (strain SARG / CCMP1375 / SS120).